Here is a 436-residue protein sequence, read N- to C-terminus: Glutamate-1-semialdehyde 2,1-aminomutase (436 aa).

The residue at position 274 (K274) is an N6-(pyridoxal phosphate)lysine.

The protein belongs to the class-III pyridoxal-phosphate-dependent aminotransferase family. HemL subfamily. Homodimer. Pyridoxal 5'-phosphate is required as a cofactor.

The protein localises to the cytoplasm. The catalysed reaction is (S)-4-amino-5-oxopentanoate = 5-aminolevulinate. The protein operates within porphyrin-containing compound metabolism; protoporphyrin-IX biosynthesis; 5-aminolevulinate from L-glutamyl-tRNA(Glu): step 2/2. This chain is Glutamate-1-semialdehyde 2,1-aminomutase, found in Albidiferax ferrireducens (strain ATCC BAA-621 / DSM 15236 / T118) (Rhodoferax ferrireducens).